We begin with the raw amino-acid sequence, 206 residues long: MGSNEVATGDPLATLDWNKGEGLLPVIVQDADNLRVLMLGYMNAQALAVTQQRGEVTFFSRSKQRLWTKGESSGNVLRVVSIQTDCDADTLLVQARPHGPTCHLGRTSCFPSAPGQFLGSLDALVAERERERPHGSYTTKLFEQGIRRIAQKVGEEGVETALAGVVQDDDALLGESADLLYHLIVLLRARGLGLGDAAALLESRHQ.

The segment at 1–117 is phosphoribosyl-AMP cyclohydrolase; the sequence is MGSNEVATGD…SCFPSAPGQF (117 aa). A phosphoribosyl-ATP pyrophosphohydrolase region spans residues 118–206; it reads LGSLDALVAE…AAALLESRHQ (89 aa).

It in the N-terminal section; belongs to the PRA-CH family. The protein in the C-terminal section; belongs to the PRA-PH family.

It is found in the cytoplasm. The catalysed reaction is 1-(5-phospho-beta-D-ribosyl)-ATP + H2O = 1-(5-phospho-beta-D-ribosyl)-5'-AMP + diphosphate + H(+). It catalyses the reaction 1-(5-phospho-beta-D-ribosyl)-5'-AMP + H2O = 1-(5-phospho-beta-D-ribosyl)-5-[(5-phospho-beta-D-ribosylamino)methylideneamino]imidazole-4-carboxamide. It participates in amino-acid biosynthesis; L-histidine biosynthesis; L-histidine from 5-phospho-alpha-D-ribose 1-diphosphate: step 2/9. Its pathway is amino-acid biosynthesis; L-histidine biosynthesis; L-histidine from 5-phospho-alpha-D-ribose 1-diphosphate: step 3/9. The polypeptide is Histidine biosynthesis bifunctional protein HisIE (Xanthomonas axonopodis pv. citri (strain 306)).